The following is a 104-amino-acid chain: Large ribosomal subunit protein uL24 (104 aa).

Belongs to the universal ribosomal protein uL24 family. In terms of assembly, part of the 50S ribosomal subunit.

Functionally, one of two assembly initiator proteins, it binds directly to the 5'-end of the 23S rRNA, where it nucleates assembly of the 50S subunit. One of the proteins that surrounds the polypeptide exit tunnel on the outside of the subunit. The protein is Large ribosomal subunit protein uL24 of Idiomarina loihiensis (strain ATCC BAA-735 / DSM 15497 / L2-TR).